Consider the following 131-residue polypeptide: Snaclec coagulation factor IX/factor X-binding protein subunit A (131 aa).

The C-type lectin domain occupies 1-131 (DCLPGWSSHE…EEPQRFTCEI (131 aa)). 3 cysteine pairs are disulfide-bonded: C2–C13, C30–C129, and C104–C121. Residues S41, E43, and E47 each coordinate Ca(2+). A Ca(2+)-binding site is contributed by E130.

Belongs to the snaclec family. Heterodimer of subunits A and B; disulfide-linked. In terms of tissue distribution, expressed by the venom gland.

Its subcellular location is the secreted. Anticoagulant protein which binds to coagulation factor IX (F9) and coagulation factor X (F10) in the presence of calcium. It may bind the gamma-carboxyglutamic acid-domain regions of factors with a 1 to 1 stoichiometry. The dissociation constant (K(d)) are 6.6 nM for factor IX (F9) and 125 nM for factor X (F10). Does not bind carbohydrates. This chain is Snaclec coagulation factor IX/factor X-binding protein subunit A, found in Echis carinatus (Saw-scaled viper).